Consider the following 173-residue polypeptide: Signal peptidase complex catalytic subunit sec11 (173 aa).

Residues methionine 1 to glutamine 15 lie on the Cytoplasmic side of the membrane. Residues isoleucine 16–valine 36 form a helical; Signal-anchor for type II membrane protein membrane-spanning segment. At serine 37–glutamate 173 the chain is on the lumenal side. Catalysis depends on charge relay system residues serine 50, histidine 89, and aspartate 115. The C-terminal short (CTS) helix stretch occupies residues valine 159–leucine 170.

This sequence belongs to the peptidase S26B family. Component of the signal peptidase complex (SPC) composed of a catalytic subunit SEC11 and three accessory subunits SPC1, SPC2 and SPC3. The complex induces a local thinning of the ER membrane which is used to measure the length of the signal peptide (SP) h-region of protein substrates. This ensures the selectivity of the complex towards h-regions shorter than 18-20 amino acids. SPC associates with the translocon complex.

It localises to the endoplasmic reticulum membrane. The enzyme catalyses Cleavage of hydrophobic, N-terminal signal or leader sequences from secreted and periplasmic proteins.. Catalytic component of the signal peptidase complex (SPC) which catalyzes the cleavage of N-terminal signal sequences from nascent proteins as they are translocated into the lumen of the endoplasmic reticulum. Specifically cleaves N-terminal signal peptides that contain a hydrophobic alpha-helix (h-region) shorter than 18-20 amino acids. This Pyrenophora tritici-repentis (strain Pt-1C-BFP) (Wheat tan spot fungus) protein is Signal peptidase complex catalytic subunit sec11 (sec11).